Consider the following 354-residue polypeptide: Neuronal growth regulator 1 (354 aa).

The signal sequence occupies residues 1–37 (MDMMLLVQGACCSNQWLAAVLLSLCCLLPSCLPAGQS). Ig-like C2-type domains are found at residues 38–134 (VDFP…VHLT), 139–221 (PKIY…KVVV), and 225–313 (PTIQ…LPLN). Cysteines 60 and 118 form a disulfide. Asparagine 73 and asparagine 155 each carry an N-linked (GlcNAc...) asparagine glycan. 2 disulfide bridges follow: cysteine 160–cysteine 203 and cysteine 245–cysteine 297. Phosphotyrosine is present on tyrosine 187. N-linked (GlcNAc...) asparagine glycans are attached at residues asparagine 275, asparagine 286, asparagine 294, and asparagine 307. Glycine 324 carries GPI-anchor amidated glycine lipidation. The propeptide at 325 to 354 (SADVLFSCWYLVLTLSSFTSIFYLKNAILQ) is removed in mature form.

It belongs to the immunoglobulin superfamily. IgLON family.

The protein resides in the cell membrane. Functionally, may be involved in cell-adhesion. May function as a trans-neural growth-promoting factor in regenerative axon sprouting in the mammalian brain. This Pongo abelii (Sumatran orangutan) protein is Neuronal growth regulator 1 (NEGR1).